A 461-amino-acid chain; its full sequence is Porin AaxA (461 aa).

A signal peptide spans methionine 1–alanine 22.

The protein belongs to the OprB family.

The protein localises to the cell outer membrane. In terms of biological role, facilitates L-arginine uptake, as part of the AaxABC system. The arginine uptake by the bacterium in the macrophage may be a virulence factor against the host innate immune response. This is Porin AaxA (aaxA) from Chlamydia trachomatis serovar A (strain ATCC VR-571B / DSM 19440 / HAR-13).